The sequence spans 473 residues: MKLSMPRFDQAPVLVVGDVMLDRYWHGGTSRISPEAPVPVVKVEQIEDRPGGAANVALNIAALGAPAALVGVTGEDEARQSLVDSLAAAGVRAHFQCLEHQPTIVKLRVMSRHQQLLRMDFEEPFDTDPAALLTDVESLLAGVKVLVLSDYGKGALKNHQALIQAARRHGIPVLADPKGKDFEIYRGASLITPNLGEFEAIVGHCADEAELVAKGAELMRQLELGALLVTRGEHGMTLLRPEHAPLHLPARAREVFDVTGAGDTVISTLAASLAAGEELPQAVALANLAAGIVVGKLGTAAISAPELRRAVQREEGSERGVMTVEQLLTVVEDARAQGEKIVFTNGCFDILHAGHVTYLEQARAQGDRLVVAVNDDGSVSRLKGPGRPINSVDRRMAVLAGLEAVDWVVCFAEDTPENLLAQVRPDVLVKGGDYGVDQVVGADLVKAYGGVVKVLGLVENSSTTAIVEKIRKA.

Positions 1–318 are ribokinase; it reads MKLSMPRFDQ…RAVQREEGSE (318 aa). ATP is bound at residue 194-197; sequence NLGE. D263 is a catalytic residue. The interval 343–473 is cytidylyltransferase; the sequence is FTNGCFDILH…TAIVEKIRKA (131 aa).

This sequence in the N-terminal section; belongs to the carbohydrate kinase PfkB family. In the C-terminal section; belongs to the cytidylyltransferase family. In terms of assembly, homodimer.

The catalysed reaction is D-glycero-beta-D-manno-heptose 7-phosphate + ATP = D-glycero-beta-D-manno-heptose 1,7-bisphosphate + ADP + H(+). It carries out the reaction D-glycero-beta-D-manno-heptose 1-phosphate + ATP + H(+) = ADP-D-glycero-beta-D-manno-heptose + diphosphate. It functions in the pathway nucleotide-sugar biosynthesis; ADP-L-glycero-beta-D-manno-heptose biosynthesis; ADP-L-glycero-beta-D-manno-heptose from D-glycero-beta-D-manno-heptose 7-phosphate: step 1/4. Its pathway is nucleotide-sugar biosynthesis; ADP-L-glycero-beta-D-manno-heptose biosynthesis; ADP-L-glycero-beta-D-manno-heptose from D-glycero-beta-D-manno-heptose 7-phosphate: step 3/4. Functionally, catalyzes the phosphorylation of D-glycero-D-manno-heptose 7-phosphate at the C-1 position to selectively form D-glycero-beta-D-manno-heptose-1,7-bisphosphate. Its function is as follows. Catalyzes the ADP transfer from ATP to D-glycero-beta-D-manno-heptose 1-phosphate, yielding ADP-D-glycero-beta-D-manno-heptose. The sequence is that of Bifunctional protein HldE from Stutzerimonas stutzeri (strain A1501) (Pseudomonas stutzeri).